The following is a 127-amino-acid chain: Large ribosomal subunit protein bL12 (127 aa).

The protein belongs to the bacterial ribosomal protein bL12 family. In terms of assembly, homodimer. Part of the ribosomal stalk of the 50S ribosomal subunit. Forms a multimeric L10(L12)X complex, where L10 forms an elongated spine to which 2 to 4 L12 dimers bind in a sequential fashion. Binds GTP-bound translation factors.

Forms part of the ribosomal stalk which helps the ribosome interact with GTP-bound translation factors. Is thus essential for accurate translation. In Sinorhizobium fredii (strain NBRC 101917 / NGR234), this protein is Large ribosomal subunit protein bL12.